A 97-amino-acid chain; its full sequence is Large ribosomal subunit protein bL36m (97 aa).

Belongs to the bacterial ribosomal protein bL36 family. In terms of assembly, component of the mitochondrial ribosome large subunit (39S) which comprises a 16S rRNA and about 50 distinct proteins.

The protein localises to the mitochondrion. The polypeptide is Large ribosomal subunit protein bL36m (Mrpl36) (Rattus norvegicus (Rat)).